Here is a 380-residue protein sequence, read N- to C-terminus: SAM and SH3 domain-containing protein 3 (380 aa).

The disordered stretch occupies residues 1–76 (MLRRKPSNAS…KSGKKLGKKW (76 aa)). Residues 22 to 41 (LQRSSSFKDFAKSKPSSPVV) show a composition bias toward low complexity. A phosphoserine mark is found at serine 27, serine 34, and serine 42. Threonine 61 bears the Phosphothreonine mark. Serine 97 carries the phosphoserine modification. 3 disordered regions span residues 98–174 (EEMA…TGPF), 237–256 (VGHA…KPKT), and 318–380 (TGSE…AGAP). Threonine 103 carries the post-translational modification Phosphothreonine. Serine 110 is modified (phosphoserine). Threonine 112 is subject to Phosphothreonine. The residue at position 113 (serine 113) is a Phosphoserine. Tyrosine 116 carries the post-translational modification Phosphotyrosine. Serine 120 carries the phosphoserine modification. A compositionally biased stretch (polar residues) spans 143-152 (RQASTGSELC). Positions 153-164 (SPSPGSGSFGEE) are enriched in low complexity. An SH3 domain is found at 173-234 (PFCGRARVHT…KFIYVDVLPE (62 aa)). Positions 241–255 (RPSRRQSKGKRPKPK) are enriched in basic residues. An SAM domain is found at 252–316 (PKPKTLHELL…LTAAELLLDY (65 aa)). Phosphothreonine is present on threonine 318. Over residues 318-327 (TGSEEAEEGA) the composition is skewed to acidic residues. Serine 320 carries the phosphoserine modification.

Its function is as follows. May function as a signaling adapter protein in lymphocytes. In Homo sapiens (Human), this protein is SAM and SH3 domain-containing protein 3 (SASH3).